The chain runs to 828 residues: Glycerol-3-phosphate acyltransferase (828 aa).

The HXXXXD motif motif lies at 309 to 314; the sequence is CHRSHI.

It belongs to the GPAT/DAPAT family.

The protein localises to the cell inner membrane. It carries out the reaction sn-glycerol 3-phosphate + an acyl-CoA = a 1-acyl-sn-glycero-3-phosphate + CoA. It functions in the pathway phospholipid metabolism; CDP-diacylglycerol biosynthesis; CDP-diacylglycerol from sn-glycerol 3-phosphate: step 1/3. The chain is Glycerol-3-phosphate acyltransferase from Pseudomonas putida (strain W619).